The sequence spans 126 residues: 13 kDa ribonucleoprotein-associated protein (126 aa).

This sequence belongs to the eukaryotic ribosomal protein eL8 family. As to quaternary structure, binds to the C'/D and B/C motifs in U3 snoRNA. Component of the U4/U6-U5 tri-snRNP complex composed of the U4, U6 and U5 snRNAs and at least PRP3, PRP4, PRP6, PRP8, PRP18, PRP31, PRP38, SNU13, SNU23, SNU66, SNU114, SPP381, SMB1, SMD1, SMD2, SMD3, SMX2, SMX3, LSM2, LSM3, LSM4, LSM5, LSM6, LSM7, LSM8, BRR2 and DIB1. Binds to the 5'-stem-loop of U4 snRNA. Component of the ribosomal small subunit (SSU) processome composed of at least 40 protein subunits and snoRNA U3.

The protein resides in the nucleus. It is found in the nucleolus. In terms of biological role, common component of the spliceosome and rRNA processing machinery. In association with the spliceosomal U4/U6.U5 tri-snRNP particle, required for splicing of pre-mRNA. In association with box C/D snoRNPs, required for processing of pre-ribosomal RNA (rRNA) and site-specific 2'-O-methylation of substrate RNAs. Essential for the accumulation and stability of U4 snRNA, U6 snRNA, and box C/D snoRNAs. In Saccharomyces cerevisiae (strain ATCC 204508 / S288c) (Baker's yeast), this protein is 13 kDa ribonucleoprotein-associated protein (SNU13).